The primary structure comprises 267 residues: 5'-nucleotidase SurE (267 aa).

The a divalent metal cation site is built by Asp-14, Asp-15, Ser-45, and Asn-100.

This sequence belongs to the SurE nucleotidase family. A divalent metal cation serves as cofactor.

The protein resides in the cytoplasm. It catalyses the reaction a ribonucleoside 5'-phosphate + H2O = a ribonucleoside + phosphate. Nucleotidase that shows phosphatase activity on nucleoside 5'-monophosphates. This Methanosarcina acetivorans (strain ATCC 35395 / DSM 2834 / JCM 12185 / C2A) protein is 5'-nucleotidase SurE.